We begin with the raw amino-acid sequence, 259 residues long: MTASSTQPASVGIFFNRQYPTLEAVCDRWGLVFDENALFELVFEDNCLVLNKRDEPKLKGIFVDFVSGAVAHRRKFGGGRGQAIAKAVGLKQGVTPSVVDGTAGLGRDAFVLASLGCNVTMVERNPVVAALLEDGLRRAYEDADIGPWMQERMRLVHGSSLTALAELGEQVDVVYLDPMYPHREKSALVKKEMRVFQSLVGADLDADGLLAPAMALASKRVVVKRPDYAEDLDGVKPNTRIETKKNRFDVYVKAAMKSE.

Residues Arg107–Asp108, Glu123–Arg124, Ser159–Ser160, and Asp177 each bind S-adenosyl-L-methionine.

It belongs to the methyltransferase superfamily. RsmJ family.

It is found in the cytoplasm. It catalyses the reaction guanosine(1516) in 16S rRNA + S-adenosyl-L-methionine = N(2)-methylguanosine(1516) in 16S rRNA + S-adenosyl-L-homocysteine + H(+). Specifically methylates the guanosine in position 1516 of 16S rRNA. The polypeptide is Ribosomal RNA small subunit methyltransferase J (Shewanella loihica (strain ATCC BAA-1088 / PV-4)).